We begin with the raw amino-acid sequence, 524 residues long: Alanine aminotransferase 2 (524 aa).

Position 342 is an N6-(pyridoxal phosphate)lysine (lysine 342).

The protein belongs to the class-I pyridoxal-phosphate-dependent aminotransferase family. Alanine aminotransferase subfamily. Homodimer. The cofactor is pyridoxal 5'-phosphate.

The catalysed reaction is L-alanine + 2-oxoglutarate = pyruvate + L-glutamate. Its pathway is amino-acid degradation; L-alanine degradation via transaminase pathway; pyruvate from L-alanine: step 1/1. Its function is as follows. Catalyzes the reversible transamination between alanine and 2-oxoglutarate to form pyruvate and glutamate. This is Alanine aminotransferase 2 (gpt2) from Xenopus tropicalis (Western clawed frog).